The sequence spans 221 residues: Ras-related protein Rab-27A (221 aa).

N-acetylserine is present on S2. Phosphoserine is present on S2. GTP is bound at residue 16-24 (GDSGVGKTS). The short motif at 38-46 (FITTVGIDF) is the Effector region element. GTP-binding positions include 74-78 (DTAGQ), 133-136 (NKSD), and 163-165 (SAA). C123 and C188 are joined by a disulfide. Positions 202-221 (NGHTSADPLNEEKEKGSCGC) are disordered. Residues 211–221 (NEEKEKGSCGC) are compositionally biased toward basic and acidic residues. Residues C219 and C221 are each lipidated (S-geranylgeranyl cysteine). C221 is subject to Cysteine methyl ester.

Belongs to the small GTPase superfamily. Rab family. In terms of assembly, binds SYTL1, SLAC2B, MYRIP, SYTL3, SYTL4 and SYTL5. Interacts with RPH3A and RPH3A. Binds MLPH and SYTL2. Interacts with UNC13D. Does not interact with the BLOC-3 complex (heterodimer of HPS1 and HPS4). Interacts (GDP-bound form preferentially) with DENND10.

The protein resides in the membrane. Its subcellular location is the melanosome. The protein localises to the late endosome. It is found in the lysosome. The catalysed reaction is GTP + H2O = GDP + phosphate + H(+). Its activity is regulated as follows. Regulated by guanine nucleotide exchange factors (GEFs) which promote the exchange of bound GDP for free GTP, GTPase activating proteins (GAPs) which increase the GTP hydrolysis activity, and GDP dissociation inhibitors which inhibit the dissociation of the nucleotide from the GTPase. Activated by GEFs such as DENND10. Functionally, small GTPase which cycles between active GTP-bound and inactive GDP-bound states. In its active state, binds to a variety of effector proteins to regulate homeostasis of late endocytic pathway, including endosomal positioning, maturation and secretion. Plays a role in cytotoxic granule exocytosis in lymphocytes. Required for both granule maturation and granule docking and priming at the immunologic synapse. This Sus scrofa (Pig) protein is Ras-related protein Rab-27A (RAB27A).